An 84-amino-acid polypeptide reads, in one-letter code: Kunitz-type serine protease inhibitor 2 (84 aa).

The signal sequence occupies residues 1 to 24; that stretch reads MSSGGLLLLLGLLTLWAEPTPISG. Residue Gln25 is modified to Pyrrolidone carboxylic acid. One can recognise a BPTI/Kunitz inhibitor domain in the interval 31–81; that stretch reads CFLRPDFGRYGHPRPRFYYNPATNQCQGFLAQRSRENTNNFDTRDKCRQTC. Disulfide bonds link Cys31/Cys81 and Cys56/Cys77.

The protein belongs to the venom Kunitz-type family. Expressed by the venom gland.

The protein localises to the secreted. Serine protease inhibitor. In Daboia russelii (Russel's viper), this protein is Kunitz-type serine protease inhibitor 2.